A 117-amino-acid polypeptide reads, in one-letter code: MNTKQSRIRRARKTRAKIAAVKAIRLAIHRTNSHIYAQIISADGGTVMASASSNDKDLRGQLANGGTTAAAAAVGKRLAEKAKGLGIEKVAFDRAGFKFHGRVKALAEAAREGGLAF.

It belongs to the universal ribosomal protein uL18 family. As to quaternary structure, part of the 50S ribosomal subunit; part of the 5S rRNA/L5/L18/L25 subcomplex. Contacts the 5S and 23S rRNAs.

Functionally, this is one of the proteins that bind and probably mediate the attachment of the 5S RNA into the large ribosomal subunit, where it forms part of the central protuberance. The protein is Large ribosomal subunit protein uL18 of Thiobacillus denitrificans (strain ATCC 25259 / T1).